The following is a 371-amino-acid chain: Neuropeptide S receptor (371 aa).

Residues 1 to 52 (MPANFTEGSFDSNGTGQMLDSSPVACTETVTFTEVVEGKEWGSFYYSFKTEQ) are Extracellular-facing. N-linked (GlcNAc...) asparagine glycosylation is found at Asn4 and Asn13. The chain crosses the membrane as a helical span at residues 53 to 73 (LITLWVLFVFTIVGNSVVLFS). Residues 74-82 (TWRRKRKSR) are Cytoplasmic-facing. A helical transmembrane segment spans residues 83 to 103 (MTFFVTQLAITDSFTGLVNIL). Over 104–123 (TDIIWRFTGDFMAPDLVCRV) the chain is Extracellular. A disulfide bond links Cys121 and Cys197. The helical transmembrane segment at 124–144 (VRYLQVVLLYASTYVLVSLSI) threads the bilayer. Topologically, residues 145–164 (DRYHAIVYPMKFLQGEKQAK) are cytoplasmic. A helical membrane pass occupies residues 165-185 (VLIVIAWSLSFLFSIPTLIIF). At 186-212 (GKRTLSNGEVQCWALWPDDSYWTPYMT) the chain is on the extracellular side. Residues 213–233 (IVAFLVYFIPLTIISVMYGIV) form a helical membrane-spanning segment. Residues 234-275 (IRTIWIKSKTYETVISNCSDGKLCSSYNRGLISKAKIKAIKY) lie on the Cytoplasmic side of the membrane. The helical transmembrane segment at 276 to 296 (SIVIILAFICCWSPYFLFDIL) threads the bilayer. The Extracellular portion of the chain corresponds to 297 to 312 (DNFNLLPDTQERFYAS). The chain crosses the membrane as a helical span at residues 313–333 (VIIQNLPALNSAINPLIYCVF). Residues 334-371 (SSSISFPCGERRSQDSIMTFRERTERHEMQILSKPEFI) are Cytoplasmic-facing.

The protein belongs to the G-protein coupled receptor 1 family. Vasopressin/oxytocin receptor subfamily.

Its subcellular location is the cell membrane. Its function is as follows. G-protein coupled receptor for neuropeptide S (NPS). Promotes mobilization of intracellular Ca(2+) stores. Inhibits cell growth in response to NPS binding. Involved in pathogenesis of asthma and other IgE-mediated diseases. The chain is Neuropeptide S receptor (NPSR1) from Macaca mulatta (Rhesus macaque).